Here is a 292-residue protein sequence, read N- to C-terminus: Ribosome-inactivating protein saporin-2 (292 aa).

Positions M1–A24 are cleaved as a signal peptide. E200 is an active-site residue.

The protein belongs to the ribosome-inactivating protein family. Type 1 RIP subfamily.

It carries out the reaction Endohydrolysis of the N-glycosidic bond at one specific adenosine on the 28S rRNA.. Functionally, ribosome-inactivating protein of type 1, inhibits protein synthesis in animal cells. Useful as immunotoxin for pharmacological applications. The sequence is that of Ribosome-inactivating protein saporin-2 (SAP2) from Saponaria officinalis (Common soapwort).